The primary structure comprises 678 residues: DNA mismatch repair protein MutL (678 aa).

This sequence belongs to the DNA mismatch repair MutL/HexB family.

Functionally, this protein is involved in the repair of mismatches in DNA. It is required for dam-dependent methyl-directed DNA mismatch repair. May act as a 'molecular matchmaker', a protein that promotes the formation of a stable complex between two or more DNA-binding proteins in an ATP-dependent manner without itself being part of a final effector complex. This is DNA mismatch repair protein MutL from Lactiplantibacillus plantarum (strain ATCC BAA-793 / NCIMB 8826 / WCFS1) (Lactobacillus plantarum).